A 135-amino-acid chain; its full sequence is uncharacterized protein (135 aa).

Belongs to the asp23 family.

This is an uncharacterized protein from Bacillus subtilis (strain 168).